The chain runs to 245 residues: MGRLDGKVIILTAAAQGIGQAAALAFAREGAKVIATDINESKLQELEKYPGIQTRVLDVTKKKQIDQFANEVERLDVLFNVAGFVHHGTVLDCEEKDWDFSMNLNVRSMYLMIKAFLPKMLAQKSGNIINMSSVASSVKGVVNRCVYSTTKAAVIGLTKSVAADFIQQGIRCNCVCPGTVDTPSLQERIQARGNPEEARNDFLKRQKTGRFATAEEIAMLCVYLASDESAYVTGNPVIIDGGWSL.

Residues 16–18 (QGI), aspartate 37, and aspartate 58 each bind NAD(+). Arginine 144 lines the substrate pocket. Tyrosine 147 (proton acceptor) is an active-site residue. NAD(+)-binding positions include lysine 151 and 180–184 (VDTPS). Positions 188 and 205 each coordinate substrate.

The protein belongs to the short-chain dehydrogenases/reductases (SDR) family. Homotetramer. In terms of tissue distribution, detected in liver (at protein level).

The protein resides in the cytoplasm. It catalyses the reaction cis-4-hydroxy-L-proline + NAD(+) = 4-oxo-L-proline + NADH + H(+). The catalysed reaction is (R)-3-hydroxybutanoate + NAD(+) = acetoacetate + NADH + H(+). The protein operates within amino-acid metabolism. It participates in siderophore biosynthesis. In terms of biological role, NAD(H)-dependent dehydrogenase/reductase with a preference for cyclic substrates. Catalyzes stereoselective conversion of 4-oxo-L-proline to cis-4-hydroxy-L-proline, likely a detoxification mechanism for ketoprolines. Mediates the formation of 2,5-dihydroxybenzoate (2,5-DHBA), a siderophore that chelates free cytoplasmic iron and associates with LCN2, thereby regulating iron transport and homeostasis while protecting cells against free radical-induced oxidative stress. The iron-siderophore complex is imported into mitochondria, providing an iron source for mitochondrial metabolic processes in particular heme synthesis. May act as a 3-hydroxybutyrate dehydrogenase. This is Dehydrogenase/reductase SDR family member 6 from Homo sapiens (Human).